The following is a 78-amino-acid chain: Small ribosomal subunit protein uS17 (78 aa).

It belongs to the universal ribosomal protein uS17 family. Part of the 30S ribosomal subunit.

Functionally, one of the primary rRNA binding proteins, it binds specifically to the 5'-end of 16S ribosomal RNA. This chain is Small ribosomal subunit protein uS17, found in Allorhizobium ampelinum (strain ATCC BAA-846 / DSM 112012 / S4) (Agrobacterium vitis (strain S4)).